The chain runs to 892 residues: Alanine--tRNA ligase (892 aa).

Zn(2+)-binding residues include His594, His598, Cys702, and His706.

This sequence belongs to the class-II aminoacyl-tRNA synthetase family. Zn(2+) is required as a cofactor.

The protein resides in the cytoplasm. The enzyme catalyses tRNA(Ala) + L-alanine + ATP = L-alanyl-tRNA(Ala) + AMP + diphosphate. In terms of biological role, catalyzes the attachment of alanine to tRNA(Ala) in a two-step reaction: alanine is first activated by ATP to form Ala-AMP and then transferred to the acceptor end of tRNA(Ala). Also edits incorrectly charged Ser-tRNA(Ala) and Gly-tRNA(Ala) via its editing domain. This chain is Alanine--tRNA ligase, found in Pyrobaculum aerophilum (strain ATCC 51768 / DSM 7523 / JCM 9630 / CIP 104966 / NBRC 100827 / IM2).